The following is a 501-amino-acid chain: Ribose import ATP-binding protein RbsA (501 aa).

ABC transporter domains follow at residues 5 to 241 (LQLK…VGRK) and 252 to 495 (APGE…VGKL). Residue 37-44 (GENGAGKS) participates in ATP binding.

Belongs to the ABC transporter superfamily. Ribose importer (TC 3.A.1.2.1) family. In terms of assembly, the complex is composed of an ATP-binding protein (RbsA), two transmembrane proteins (RbsC) and a solute-binding protein (RbsB).

Its subcellular location is the cell inner membrane. It carries out the reaction D-ribose(out) + ATP + H2O = D-ribose(in) + ADP + phosphate + H(+). Functionally, part of the ABC transporter complex RbsABC involved in ribose import. Responsible for energy coupling to the transport system. This Salmonella paratyphi A (strain ATCC 9150 / SARB42) protein is Ribose import ATP-binding protein RbsA.